We begin with the raw amino-acid sequence, 280 residues long: Truncated lectin 2 (280 aa).

An N-terminal signal peptide occupies residues 1–26; it reads MSSSNFSCILSISLTFFILLLNKVNS. Glu148 and Asp150 together coordinate Mn(2+). Positions 150, 152, 154, and 158 each coordinate Ca(2+). Asp158 serves as a coordination point for Mn(2+). Residue Asn163 is glycosylated (N-linked (GlcNAc...) asparagine). His170 provides a ligand contact to Mn(2+). A glycan (N-linked (GlcNAc...) asparagine) is linked at Asn272.

The protein belongs to the leguminous lectin family.

The polypeptide is Truncated lectin 2 (LEC2) (Medicago truncatula (Barrel medic)).